The sequence spans 222 residues: Phosphoribosylformylglycinamidine synthase subunit PurQ (222 aa).

One can recognise a Glutamine amidotransferase type-1 domain in the interval 3–222 (SAVIQLPGLN…LFESVLGRAA (220 aa)). Residue cysteine 86 is the Nucleophile of the active site. Catalysis depends on residues histidine 196 and glutamate 198.

As to quaternary structure, part of the FGAM synthase complex composed of 1 PurL, 1 PurQ and 2 PurS subunits.

It localises to the cytoplasm. It catalyses the reaction N(2)-formyl-N(1)-(5-phospho-beta-D-ribosyl)glycinamide + L-glutamine + ATP + H2O = 2-formamido-N(1)-(5-O-phospho-beta-D-ribosyl)acetamidine + L-glutamate + ADP + phosphate + H(+). The enzyme catalyses L-glutamine + H2O = L-glutamate + NH4(+). It functions in the pathway purine metabolism; IMP biosynthesis via de novo pathway; 5-amino-1-(5-phospho-D-ribosyl)imidazole from N(2)-formyl-N(1)-(5-phospho-D-ribosyl)glycinamide: step 1/2. Its function is as follows. Part of the phosphoribosylformylglycinamidine synthase complex involved in the purines biosynthetic pathway. Catalyzes the ATP-dependent conversion of formylglycinamide ribonucleotide (FGAR) and glutamine to yield formylglycinamidine ribonucleotide (FGAM) and glutamate. The FGAM synthase complex is composed of three subunits. PurQ produces an ammonia molecule by converting glutamine to glutamate. PurL transfers the ammonia molecule to FGAR to form FGAM in an ATP-dependent manner. PurS interacts with PurQ and PurL and is thought to assist in the transfer of the ammonia molecule from PurQ to PurL. In Chelativorans sp. (strain BNC1), this protein is Phosphoribosylformylglycinamidine synthase subunit PurQ.